The sequence spans 153 residues: T cell receptor delta constant (153 aa).

Asn-14 carries an N-linked (GlcNAc...) asparagine glycan. Cysteines 20 and 71 form a disulfide. N-linked (GlcNAc...) asparagine glycosylation occurs at Asn-77. Residues 85-102 are compositionally biased toward basic and acidic residues; that stretch reads FEVKTDSTDHVKPKETEN. The interval 85–112 is disordered; that stretch reads FEVKTDSTDHVKPKETENTKQPSKSCHK. The helical transmembrane segment at 130–152 threads the bilayer; the sequence is LGLRMLFAKTVAVNFLLTAKLFF.

Gamma-delta TR is a heterodimer composed of a gamma and delta chain; disulfide-linked. The gamma-delta TR is associated with the transmembrane signaling CD3 coreceptor proteins following the stoichiometry: a single gamma-delta TR heterodimer associates with one CD3D-CD3E heterodimer, one CD3G-CD3E heterodimer and one CD247 homodimer forming a stable octameric structure. Upon activation, gamma-delta TR complex associates with FCER1G to initiate intracellular signaling.

The protein resides in the cell membrane. In terms of biological role, constant region of T cell receptor (TR) delta chain that participates in the antigen recognition. Gamma-delta TRs recognize a variety of self and foreign non-peptide antigens frequently expressed at the epithelial boundaries between the host and external environment, including endogenous lipids presented by MH-like protein CD1D and phosphoantigens presented by butyrophilin-like molecule BTN3A1. Upon antigen recognition induces rapid, innate-like immune responses involved in pathogen clearance and tissue repair. Binding of gamma-delta TR complex to antigen triggers phosphorylation of immunoreceptor tyrosine-based activation motifs (ITAMs) in the CD3 chains by the LCK and FYN kinases, allowing the recruitment, phosphorylation, and activation of ZAP70 that facilitates phosphorylation of the scaffolding proteins LCP2 and LAT. This lead to the formation of a supramolecular signalosome that recruits the phospholipase PLCG1, resulting in calcium mobilization and ERK activation, ultimately leading to T cell expansion and differentiation into effector cells. Gamma-delta TRs are produced through somatic rearrangement of a limited repertoire of variable (V), diversity (D), and joining (J) genes. The potential diversity of gamma-delta TRs is conferred by the unique ability to rearrange (D) genes in tandem and to utilize all three reading frames. The combinatorial diversity is considerably increased by the sequence exonuclease trimming and random nucleotide (N) region additions which occur during the V-(D)-J rearrangements. This is T cell receptor delta constant from Homo sapiens (Human).